Consider the following 294-residue polypeptide: Store-operated calcium entry regulator STIMATE (294 aa).

Residues 1 to 22 (MQGPAGNASRGLPGGPPSTVAS) are disordered. At 1-28 (MQGPAGNASRGLPGGPPSTVASGAGRCE) the chain is on the cytoplasmic side. 3 helical membrane passes run 29–49 (SGAL…VVAF), 69–89 (IWFL…FANV), and 102–122 (LYLI…YVGV). The GXXXG motif motif lies at 149–153 (GAWVG). The next 2 membrane-spanning stretches (helical) occupy residues 156–176 (ALYI…LLIL) and 194–214 (LAIV…WVVD). The Cytoplasmic portion of the chain corresponds to 215-294 (NFLMRKGKTK…KKKHRFGLPV (80 aa)). The segment at 227 to 268 (LEERGANQDSRNGSKVRYRRAASHEESESEILISADDEMEES) is disordered. The segment at 241-246 (KVRYRR) is required for localization in the endoplasmic reticulum.

It belongs to the STIMATE family. As to quaternary structure, homooligomer. Interacts with STIM1. As to expression, widely expressed.

The protein localises to the endoplasmic reticulum membrane. Acts as a regulator of store-operated Ca(2+) entry (SOCE) at junctional sites that connect the endoplasmic reticulum (ER) and plasma membrane (PM), called ER-plasma membrane (ER-PM) junction or cortical ER. SOCE is a Ca(2+) influx following depletion of intracellular Ca(2+) stores. Acts by interacting with STIM1, promoting STIM1 conformational switch. Involved in STIM1 relocalization to ER-PM junctions. Contributes to the maintenance and reorganization of store-dependent ER-PM junctions. This Homo sapiens (Human) protein is Store-operated calcium entry regulator STIMATE.